Here is a 462-residue protein sequence, read N- to C-terminus: uncharacterized protein (462 aa).

Positions 12–70 constitute a TRAM domain; sequence MLKKNDIIQVAISDLSHEGAGVAKHDGFVFFVDNALPEEVIDMRVLKVNKNSGFGKVEA. S-adenosyl-L-methionine contacts are provided by Q294, Y323, E344, and D392. The active-site Nucleophile is the C419.

It belongs to the class I-like SAM-binding methyltransferase superfamily. RNA M5U methyltransferase family.

This is an uncharacterized protein from Streptococcus pyogenes serotype M3 (strain ATCC BAA-595 / MGAS315).